The chain runs to 830 residues: Scavenger receptor class F member 1 (830 aa).

An N-terminal signal peptide occupies residues 1–19 (MGLGLLLPLLLLWTRGTQG). Residues 20–421 (SELDPKGQHV…CQPGSGSRDT (402 aa)) are Extracellular-facing. 4 consecutive EGF-like domains span residues 53–87 (TIPI…AHCS), 95–130 (WGPD…ARCE), 155–191 (WSST…RRCS), and 215–249 (WGPE…ARCE). Intrachain disulfides connect cysteine 57–cysteine 69, cysteine 63–cysteine 75, cysteine 77–cysteine 86, cysteine 99–cysteine 111, cysteine 105–cysteine 118, cysteine 120–cysteine 129, cysteine 159–cysteine 172, cysteine 165–cysteine 179, cysteine 181–cysteine 190, cysteine 219–cysteine 230, cysteine 225–cysteine 237, and cysteine 239–cysteine 248. An N-linked (GlcNAc...) asparagine glycan is attached at asparagine 289. 2 consecutive EGF-like domains span residues 302–339 (FGES…PRCE) and 351–382 (CGST…PSCN). 6 disulfides stabilise this stretch: cysteine 306–cysteine 319, cysteine 313–cysteine 326, cysteine 329–cysteine 338, cysteine 355–cysteine 363, cysteine 358–cysteine 370, and cysteine 372–cysteine 381. N-linked (GlcNAc...) asparagine glycans are attached at residues asparagine 382 and asparagine 393. The chain crosses the membrane as a helical span at residues 422–442 (ALIAGSLVPLLLLFLGLACCA). The Cytoplasmic segment spans residues 443 to 830 (CCCWAPRSDL…VVPISRPPEP (388 aa)). Disordered stretches follow at residues 516 to 539 (GWAT…PAYC), 581 to 688 (SLAR…SGPV), and 715 to 830 (FQKG…PPEP). Serine 589 and serine 606 each carry phosphoserine. The span at 634 to 643 (ESTGPEEAEA) shows a compositional bias: acidic residues. Residues 644–653 (PESFPAAASP) are compositionally biased toward low complexity.

Heterophilic interaction with SREC2 via its extracellular domain. The heterophilic interaction is suppressed by the presence of ligand such as Ac-LDL. Interacts with AVIL. As to expression, endothelial cells.

It localises to the membrane. In terms of biological role, mediates the binding and degradation of acetylated low density lipoprotein (Ac-LDL). Mediates heterophilic interactions, suggesting a function as adhesion protein. Plays a role in the regulation of neurite-like outgrowth. The polypeptide is Scavenger receptor class F member 1 (SCARF1) (Homo sapiens (Human)).